The following is a 225-amino-acid chain: UPF0758 protein Sfri_3828 (225 aa).

The region spanning 102–224 is the MPN domain; the sequence is ILTNPDLTRD…IVSFAERGWI (123 aa). H173, H175, and D186 together coordinate Zn(2+). The JAMM motif signature appears at 173-186; it reads HNHPSGIAEPSQAD.

Belongs to the UPF0758 family.

This is UPF0758 protein Sfri_3828 from Shewanella frigidimarina (strain NCIMB 400).